Consider the following 371-residue polypeptide: Dual-specificity RNA methyltransferase RlmN (371 aa).

Residue glutamate 97 is the Proton acceptor of the active site. Residues 103–341 (DGDRATLCVS…VTVRTTRGDD (239 aa)) enclose the Radical SAM core domain. The cysteines at positions 110 and 346 are disulfide-linked. [4Fe-4S] cluster contacts are provided by cysteine 117, cysteine 121, and cysteine 124. S-adenosyl-L-methionine is bound by residues 171–172 (GE), serine 203, 225–227 (SLH), and asparagine 303. The active-site S-methylcysteine intermediate is the cysteine 346.

This sequence belongs to the radical SAM superfamily. RlmN family. It depends on [4Fe-4S] cluster as a cofactor.

The protein resides in the cytoplasm. It carries out the reaction adenosine(2503) in 23S rRNA + 2 reduced [2Fe-2S]-[ferredoxin] + 2 S-adenosyl-L-methionine = 2-methyladenosine(2503) in 23S rRNA + 5'-deoxyadenosine + L-methionine + 2 oxidized [2Fe-2S]-[ferredoxin] + S-adenosyl-L-homocysteine. The catalysed reaction is adenosine(37) in tRNA + 2 reduced [2Fe-2S]-[ferredoxin] + 2 S-adenosyl-L-methionine = 2-methyladenosine(37) in tRNA + 5'-deoxyadenosine + L-methionine + 2 oxidized [2Fe-2S]-[ferredoxin] + S-adenosyl-L-homocysteine. In terms of biological role, specifically methylates position 2 of adenine 2503 in 23S rRNA and position 2 of adenine 37 in tRNAs. m2A2503 modification seems to play a crucial role in the proofreading step occurring at the peptidyl transferase center and thus would serve to optimize ribosomal fidelity. This is Dual-specificity RNA methyltransferase RlmN from Marinomonas sp. (strain MWYL1).